Here is a 212-residue protein sequence, read N- to C-terminus: Translation initiation factor IF-3 (212 aa).

The protein belongs to the IF-3 family. As to quaternary structure, monomer.

It is found in the cytoplasm. Its function is as follows. IF-3 binds to the 30S ribosomal subunit and shifts the equilibrium between 70S ribosomes and their 50S and 30S subunits in favor of the free subunits, thus enhancing the availability of 30S subunits on which protein synthesis initiation begins. This Synechococcus sp. (strain CC9311) protein is Translation initiation factor IF-3.